Reading from the N-terminus, the 400-residue chain is Elongation factor Tu (400 aa).

The region spanning 10–210 (KPHCNVGTIG…VDSYIPIPPR (201 aa)) is the tr-type G domain. The G1 stretch occupies residues 19–26 (GHVDHGKT). 19-26 (GHVDHGKT) contacts GTP. T26 serves as a coordination point for Mg(2+). Positions 60–64 (GLTIA) are G2. The G3 stretch occupies residues 81–84 (DCPG). GTP contacts are provided by residues 81 to 85 (DCPGH) and 136 to 139 (NKCD). The segment at 136-139 (NKCD) is G4. The tract at residues 174-176 (SAI) is G5.

It belongs to the TRAFAC class translation factor GTPase superfamily. Classic translation factor GTPase family. EF-Tu/EF-1A subfamily. Monomer.

The protein localises to the cytoplasm. The enzyme catalyses GTP + H2O = GDP + phosphate + H(+). In terms of biological role, GTP hydrolase that promotes the GTP-dependent binding of aminoacyl-tRNA to the A-site of ribosomes during protein biosynthesis. This Dehalococcoides mccartyi (strain ATCC BAA-2266 / KCTC 15142 / 195) (Dehalococcoides ethenogenes (strain 195)) protein is Elongation factor Tu.